The following is a 187-amino-acid chain: Oleosin Zm-II (187 aa).

Alanine 2 bears the N-acetylalanine mark. The segment at 2–51 (ADRDRSGIYGGAHATYGQQQQQGGGGRPMGEQVKKGMLHDKGPTASQALT) is polar. The tract at residues 17–42 (YGQQQQQGGGGRPMGEQVKKGMLHDK) is disordered. The span at 33 to 42 (QVKKGMLHDK) shows a compositional bias: basic and acidic residues. A run of 3 helical transmembrane segments spans residues 50 to 70 (LTVA…GLAL), 83 to 103 (VFLI…TAVM), and 104 to 124 (GFLT…CLAN). The hydrophobic stretch occupies residues 52–123 (VATLFPLGGL…GGLSSLTCLA (72 aa)). Positions 155-169 (TAQAGQAIQGRAQEA) are enriched in low complexity. A disordered region spans residues 155-187 (TAQAGQAIQGRAQEAGTGGGAGAGAGGGGRASS). Residues 170-187 (GTGGGAGAGAGGGGRASS) are compositionally biased toward gly residues.

The protein belongs to the oleosin family. In terms of processing, the N-terminus is blocked. In terms of tissue distribution, found in embryonic axis, scutellum, and aleurone layer.

Its subcellular location is the lipid droplet. It localises to the membrane. Its function is as follows. May have a structural role to stabilize the lipid body during desiccation of the seed by preventing coalescence of the oil. Probably interacts with both lipid and phospholipid moieties of lipid bodies. May also provide recognition signals for specific lipase anchorage in lipolysis during seedling growth. The sequence is that of Oleosin Zm-II (OLE18) from Zea mays (Maize).